Reading from the N-terminus, the 499-residue chain is Neuronal acetylcholine receptor subunit alpha-3 (499 aa).

A signal peptide spans Met1–Ala25. At Ser26–Ile244 the chain is on the extracellular side. Residues Asn49 and Asn166 are each glycosylated (N-linked (GlcNAc...) asparagine). Disulfide bonds link Cys153–Cys167 and Cys217–Cys218. A helical membrane pass occupies residues Pro245–Pro260. Over Ser261 to Asp262 the chain is Cytoplasmic. The chain crosses the membrane as a helical span at residues Cys263–Val279. Glu265 contributes to the Na(+) binding site. Residues Phe280–Tyr301 lie on the Extracellular side of the membrane. Residues Leu302–Leu320 traverse the membrane as a helical segment. Residues Asn321–Val468 are Cytoplasmic-facing. 2 positions are modified to phosphoserine: Ser407 and Ser410. A helical membrane pass occupies residues Ile469–Gly487. Over Leu488–Thr499 the chain is Extracellular.

It belongs to the ligand-gated ion channel (TC 1.A.9) family. Acetylcholine receptor (TC 1.A.9.1) subfamily. Alpha-3/CHRNA3 sub-subfamily. Neuronal AChR is composed of two different types of subunits: alpha and beta. CHRNA3/Alpha-3 subunit can be combined to CHRNB2/beta-2 or CHRNB4/beta-4 to give rise to functional receptors. Part of a complex composed of STUB1/CHIP, VCP/p97, CHRNA3, and UBXN2A that modulates the ubiquitination and endoplasmic reticulum-associated degradation (ERAD) of CHRNA3. Within the complex UBXN2A acts as a scaffold protein required for the interaction of CHRNA3 with VCP/p97, this interaction also inhibits CHRNA3 ubiquitination by STUB1/CHIP and subsequently ERAD. Interacts with UBXN2A (via SEP domain), the interaction is required for the interaction of CHRNA3 in the STUB1:VCP:UBXN2A complex. Interacts with RIC3; which is required for proper folding and assembly. Interacts with LYPD6. Ubiquitinated; by STUB1/CHIP and thereafter degraded by the 26S proteosome complex. As to expression, expressed in the brain (at protein level).

Its subcellular location is the synaptic cell membrane. It localises to the cell membrane. The protein resides in the endoplasmic reticulum. The protein localises to the golgi apparatus. It carries out the reaction K(+)(in) = K(+)(out). It catalyses the reaction Na(+)(in) = Na(+)(out). The enzyme catalyses Ca(2+)(in) = Ca(2+)(out). With respect to regulation, activated by a myriad of ligands such as acetylcholine, cytisine, nicotine, choline and epibatidine. The heteropentamer CHRNA3:CHRNB2 activity is blocked by alpha-conotoxins ImI, ImII, PnIA, GID and MII. The heteropentamer CHRNA3:CHRNB4 activity is blocked by the alpha-conotoxin ImI. In terms of biological role, component of neuronal acetylcholine receptors (nAChRs) that function as pentameric, ligand-gated cation channels with high calcium permeability among other activities. nAChRs are excitatory neurotrasnmitter receptors formed by a collection of nAChR subunits known to mediate synaptic transmission in the nervous system and the neuromuscular junction. Each nAchR subunit confers differential attributes to channel properties, including activation, deactivation and desensitization kinetics, pH sensitivity, cation permeability, and binding to allosteric modulators. CHRNA3 forms heteropentameric neuronal acetylcholine receptors with CHRNA5, CHRNB2 and CHRNB4. CHRNA3:CHRNB4 being predominant in neurons of the autonomic ganglia, it is known as ganglionic nicotinic receptor. CHRNA3:CHRNB4 or CHRNA3:CHRNA5:CHRNB4 play also an important role in the habenulo-interpeduncular tract, modulating the mesolimbic dopamine system and affecting reward circuits and addiction. Hypothalamic CHRNA3:CHRNB4 nAChR activation by nicotine leads to activation of POMC neurons and a decrease in food intake. Also expressed in the urothelium where it modulates reflex bladder activity by increasing intracellular calcium through extracellular influx and basal ATP release. The protein is Neuronal acetylcholine receptor subunit alpha-3 (Chrna3) of Mus musculus (Mouse).